We begin with the raw amino-acid sequence, 310 residues long: Ribosomal RNA large subunit methyltransferase F (310 aa).

The protein belongs to the methyltransferase superfamily. METTL16/RlmF family.

The protein resides in the cytoplasm. It carries out the reaction adenosine(1618) in 23S rRNA + S-adenosyl-L-methionine = N(6)-methyladenosine(1618) in 23S rRNA + S-adenosyl-L-homocysteine + H(+). In terms of biological role, specifically methylates the adenine in position 1618 of 23S rRNA. The polypeptide is Ribosomal RNA large subunit methyltransferase F (Psychromonas ingrahamii (strain DSM 17664 / CCUG 51855 / 37)).